A 60-amino-acid chain; its full sequence is Large ribosomal subunit protein bL32 (60 aa).

A compositionally biased stretch (basic residues) spans 1 to 22; it reads MAVPKKKTSKSRRDMRRSHHAL. The disordered stretch occupies residues 1 to 27; the sequence is MAVPKKKTSKSRRDMRRSHHALKGSAY.

It belongs to the bacterial ribosomal protein bL32 family.

The protein is Large ribosomal subunit protein bL32 of Rhodospirillum centenum (strain ATCC 51521 / SW).